The following is a 233-amino-acid chain: MSTDLQHIRIGLTNNHPCSYLPERQERVAVALDAELHTEQNYQLLMANGFRRSGDTIYKPHCERCHACQPIRISIPDFVLSRSQKRLLSKAKSLRWEMKTEMDAEWFELYSRYICKRHKNGTMYPPKRDEFSRFAQTTWLTTLFLHIYDESNQLLGVAVTDVMAQCSSAFYTFFEPDYPLSLGTLAVLYQVNYCQQNNEQWLYLGYQIDECPAMNYKTRFQRHQRLVNQRWQG.

This sequence belongs to the R-transferase family. Bpt subfamily.

Its subcellular location is the cytoplasm. The catalysed reaction is N-terminal L-glutamyl-[protein] + L-leucyl-tRNA(Leu) = N-terminal L-leucyl-L-glutamyl-[protein] + tRNA(Leu) + H(+). The enzyme catalyses N-terminal L-aspartyl-[protein] + L-leucyl-tRNA(Leu) = N-terminal L-leucyl-L-aspartyl-[protein] + tRNA(Leu) + H(+). In terms of biological role, functions in the N-end rule pathway of protein degradation where it conjugates Leu from its aminoacyl-tRNA to the N-termini of proteins containing an N-terminal aspartate or glutamate. This is Aspartate/glutamate leucyltransferase from Vibrio parahaemolyticus serotype O3:K6 (strain RIMD 2210633).